The chain runs to 397 residues: Tryptophan synthase beta chain (397 aa).

Residue lysine 91 is modified to N6-(pyridoxal phosphate)lysine.

It belongs to the TrpB family. Tetramer of two alpha and two beta chains. Requires pyridoxal 5'-phosphate as cofactor.

The catalysed reaction is (1S,2R)-1-C-(indol-3-yl)glycerol 3-phosphate + L-serine = D-glyceraldehyde 3-phosphate + L-tryptophan + H2O. It functions in the pathway amino-acid biosynthesis; L-tryptophan biosynthesis; L-tryptophan from chorismate: step 5/5. Its function is as follows. The beta subunit is responsible for the synthesis of L-tryptophan from indole and L-serine. The sequence is that of Tryptophan synthase beta chain from Bacillus anthracis (strain A0248).